Here is a 433-residue protein sequence, read N- to C-terminus: Chaperone SurA (433 aa).

An N-terminal signal peptide occupies residues 1-28 (MTAITRITLTGALLAAALLLAALQPARA). 2 PpiC domains span residues 174 to 277 (NQEY…KLMD) and 286 to 386 (VTET…QVTD).

The protein resides in the periplasm. The enzyme catalyses [protein]-peptidylproline (omega=180) = [protein]-peptidylproline (omega=0). In terms of biological role, chaperone involved in the correct folding and assembly of outer membrane proteins. Recognizes specific patterns of aromatic residues and the orientation of their side chains, which are found more frequently in integral outer membrane proteins. May act in both early periplasmic and late outer membrane-associated steps of protein maturation. The protein is Chaperone SurA of Alkalilimnicola ehrlichii (strain ATCC BAA-1101 / DSM 17681 / MLHE-1).